The sequence spans 1239 residues: Protein strawberry notch homolog 1 (1239 aa).

Residues 684–837 (AQSNNNSPRD…SANSNTNSSF (154 aa)) are disordered. The span at 694 to 713 (SPCKENKIKKRKGEEVSREA) shows a compositional bias: basic and acidic residues. The segment covering 728-744 (DESESESDASDNEESDN) has biased composition (acidic residues). Residues 778 to 790 (KEHKKVKEKKKKK) show a composition bias toward basic residues. Residues 814–837 (FTSTVGTTTSSTNASANSNTNSSF) show a composition bias toward low complexity. Residues 838–866 (VTSQDAVERAQQMKKELLDKLEKLAEDLP) are a coiled coil.

The protein belongs to the SBNO family.

It is found in the nucleus. In terms of biological role, plays a crucial role in the regulation of neural stem cells (NSCs) proliferation. Enhances the phosphorylation of GSK3B through the PI3K-Akt signaling pathway, thereby upregulating the Wnt/beta-catenin signaling pathway and promoting the proliferation of NSCs. The polypeptide is Protein strawberry notch homolog 1 (SBNO1) (Gallus gallus (Chicken)).